The sequence spans 356 residues: GTPase Obg (356 aa).

The region spanning Met1–Ile159 is the Obg domain. The OBG-type G domain occupies Ala160–Ser327. GTP is bound by residues Gly166 to Ser173, Phe191 to His195, Asp212 to Gly215, Asn279 to Asp282, and Ser308 to Ala310. Mg(2+) is bound by residues Ser173 and Thr193. A disordered region spans residues Ser332 to Gly356.

Belongs to the TRAFAC class OBG-HflX-like GTPase superfamily. OBG GTPase family. Monomer. The cofactor is Mg(2+).

It is found in the cytoplasm. Its function is as follows. An essential GTPase which binds GTP, GDP and possibly (p)ppGpp with moderate affinity, with high nucleotide exchange rates and a fairly low GTP hydrolysis rate. Plays a role in control of the cell cycle, stress response, ribosome biogenesis and in those bacteria that undergo differentiation, in morphogenesis control. The protein is GTPase Obg of Bradyrhizobium sp. (strain BTAi1 / ATCC BAA-1182).